Consider the following 206-residue polypeptide: LexA repressor (206 aa).

Positions 28-48 (RAEIATRLGFKSANAAEEHLK) form a DNA-binding region, H-T-H motif. Residues Ser123 and Lys160 each act as for autocatalytic cleavage activity in the active site.

The protein belongs to the peptidase S24 family. As to quaternary structure, homodimer.

The enzyme catalyses Hydrolysis of Ala-|-Gly bond in repressor LexA.. Functionally, represses a number of genes involved in the response to DNA damage (SOS response), including recA and lexA. In the presence of single-stranded DNA, RecA interacts with LexA causing an autocatalytic cleavage which disrupts the DNA-binding part of LexA, leading to derepression of the SOS regulon and eventually DNA repair. The sequence is that of LexA repressor from Shewanella sp. (strain ANA-3).